The chain runs to 843 residues: uncharacterized protein (843 aa).

Residues 15–42 (CLRCKQRKIKCDKLWPTCSKCKASSSIC) constitute a DNA-binding region (zn(2)-C6 fungal-type).

The protein localises to the nucleus. Required for growth on non-fermentable carbon sources. This is an uncharacterized protein from Saccharomyces cerevisiae (strain ATCC 204508 / S288c) (Baker's yeast).